The chain runs to 123 residues: Small ribosomal subunit protein uS13 (123 aa).

Residues 97 to 123 (PVRGQRTKTNARTRKGPRKTVGVRRKK) form a disordered region.

This sequence belongs to the universal ribosomal protein uS13 family. As to quaternary structure, part of the 30S ribosomal subunit. Forms a loose heterodimer with protein S19. Forms two bridges to the 50S subunit in the 70S ribosome.

Its function is as follows. Located at the top of the head of the 30S subunit, it contacts several helices of the 16S rRNA. In the 70S ribosome it contacts the 23S rRNA (bridge B1a) and protein L5 of the 50S subunit (bridge B1b), connecting the 2 subunits; these bridges are implicated in subunit movement. Contacts the tRNAs in the A and P-sites. The protein is Small ribosomal subunit protein uS13 of Pelotomaculum thermopropionicum (strain DSM 13744 / JCM 10971 / SI).